The primary structure comprises 317 residues: tRNA dimethylallyltransferase (317 aa).

ATP is bound at residue 16 to 23 (GPTASGKS). Position 18 to 23 (18 to 23 (TASGKS)) interacts with substrate. 3 interaction with substrate tRNA regions span residues 41-44 (DSAQ), 165-169 (QRIQR), and 247-252 (RCVGYR).

This sequence belongs to the IPP transferase family. In terms of assembly, monomer. Requires Mg(2+) as cofactor.

The enzyme catalyses adenosine(37) in tRNA + dimethylallyl diphosphate = N(6)-dimethylallyladenosine(37) in tRNA + diphosphate. Its function is as follows. Catalyzes the transfer of a dimethylallyl group onto the adenine at position 37 in tRNAs that read codons beginning with uridine, leading to the formation of N6-(dimethylallyl)adenosine (i(6)A). The chain is tRNA dimethylallyltransferase from Nitrosomonas europaea (strain ATCC 19718 / CIP 103999 / KCTC 2705 / NBRC 14298).